The following is a 350-amino-acid chain: S-adenosylmethionine:tRNA ribosyltransferase-isomerase (350 aa).

This sequence belongs to the QueA family. As to quaternary structure, monomer.

It is found in the cytoplasm. The enzyme catalyses 7-aminomethyl-7-carbaguanosine(34) in tRNA + S-adenosyl-L-methionine = epoxyqueuosine(34) in tRNA + adenine + L-methionine + 2 H(+). It participates in tRNA modification; tRNA-queuosine biosynthesis. Its function is as follows. Transfers and isomerizes the ribose moiety from AdoMet to the 7-aminomethyl group of 7-deazaguanine (preQ1-tRNA) to give epoxyqueuosine (oQ-tRNA). In Aliivibrio salmonicida (strain LFI1238) (Vibrio salmonicida (strain LFI1238)), this protein is S-adenosylmethionine:tRNA ribosyltransferase-isomerase.